A 1029-amino-acid polypeptide reads, in one-letter code: Serine/threonine-protein kinase KSP1 (1029 aa).

The Protein kinase domain occupies 18 to 351 (YQKIEDISEG…TELQNLSEYT (334 aa)). ATP contacts are provided by residues 27-35 (GSYGYVSLA) and Lys47. The segment covering 56 to 79 (GQYDGPQDDENDCDSSDCDDDEDT) has biased composition (acidic residues). The disordered stretch occupies residues 56–105 (GQYDGPQDDENDCDSSDCDDDEDTKVDTDRHENENGNASSNNGSSREKKH). The segment covering 80-89 (KVDTDRHENE) has biased composition (basic and acidic residues). Over residues 90–99 (NGNASSNNGS) the composition is skewed to low complexity. Catalysis depends on Asp207, which acts as the Proton acceptor. Positions 377–397 (VPPSSAPVSLPTPISSSNKQH) are disordered. Residues Ser416 and Ser419 each carry the phosphoserine modification. Residues Thr501, Thr504, and Thr526 each carry the phosphothreonine modification. At Ser529 the chain carries Phosphoserine. Residues 532 to 570 (HRYMEGFSNNNNKQYRQNRNYNNNNNNSNNNHGSNYNNF) are disordered. Residues 538–570 (FSNNNNKQYRQNRNYNNNNNNSNNNHGSNYNNF) are compositionally biased toward low complexity. Phosphoserine is present on Ser646. The interval 732–824 (STNHNNNGNN…SDSKELEQER (93 aa)) is disordered. Residues 734-743 (NHNNNGNNNH) show a composition bias toward low complexity. Polar residues predominate over residues 744-754 (IDTNSTTNQYH). A compositionally biased stretch (basic and acidic residues) spans 813 to 824 (HSSDSKELEQER). Ser845 and Ser884 each carry phosphoserine. Residues 949-978 (EYEGESDKMAHGKMEGGDNESSSTSPDERQ) are disordered. A compositionally biased stretch (basic and acidic residues) spans 953–964 (ESDKMAHGKMEG). Thr1005 carries the post-translational modification Phosphothreonine. Position 1014 is a phosphoserine (Ser1014).

Belongs to the protein kinase superfamily. Ser/Thr protein kinase family. CK2 subfamily. In terms of processing, phosphorylated by PKA in a TORC1-dependent manner. Phosphorylation at PKA consensus sites RRxS/T decreases upon rapamycin treatment.

It localises to the nucleus. The enzyme catalyses L-seryl-[protein] + ATP = O-phospho-L-seryl-[protein] + ADP + H(+). The catalysed reaction is L-threonyl-[protein] + ATP = O-phospho-L-threonyl-[protein] + ADP + H(+). May act on PRP20. The chain is Serine/threonine-protein kinase KSP1 (KSP1) from Saccharomyces cerevisiae (strain ATCC 204508 / S288c) (Baker's yeast).